Reading from the N-terminus, the 279-residue chain is Shikimate dehydrogenase (NADP(+)) (279 aa).

Shikimate contacts are provided by residues 16-18 and threonine 63; that span reads SRS. The Proton acceptor role is filled by lysine 67. Shikimate is bound by residues asparagine 88 and aspartate 103. Residues 128 to 132 and methionine 219 contribute to the NADP(+) site; that span reads GAGGA. Tyrosine 221 serves as a coordination point for shikimate. Glycine 243 lines the NADP(+) pocket.

Belongs to the shikimate dehydrogenase family. In terms of assembly, homodimer.

The catalysed reaction is shikimate + NADP(+) = 3-dehydroshikimate + NADPH + H(+). It functions in the pathway metabolic intermediate biosynthesis; chorismate biosynthesis; chorismate from D-erythrose 4-phosphate and phosphoenolpyruvate: step 4/7. Functionally, involved in the biosynthesis of the chorismate, which leads to the biosynthesis of aromatic amino acids. Catalyzes the reversible NADPH linked reduction of 3-dehydroshikimate (DHSA) to yield shikimate (SA). The chain is Shikimate dehydrogenase (NADP(+)) from Aromatoleum aromaticum (strain DSM 19018 / LMG 30748 / EbN1) (Azoarcus sp. (strain EbN1)).